The sequence spans 289 residues: Probable endonuclease 4 (289 aa).

Zn(2+) is bound by residues His-74, His-115, Glu-150, Asp-184, His-187, His-218, Asp-231, His-233, and Glu-263.

Belongs to the AP endonuclease 2 family. Requires Zn(2+) as cofactor.

It catalyses the reaction Endonucleolytic cleavage to 5'-phosphooligonucleotide end-products.. Functionally, endonuclease IV plays a role in DNA repair. It cleaves phosphodiester bonds at apurinic or apyrimidinic (AP) sites, generating a 3'-hydroxyl group and a 5'-terminal sugar phosphate. In Mycoplasma capricolum subsp. capricolum (strain California kid / ATCC 27343 / NCTC 10154), this protein is Probable endonuclease 4.